Consider the following 265-residue polypeptide: Hemin import ATP-binding protein HmuV (265 aa).

Residues 13 to 249 (LKASNLHLQL…TAVENVYGWP (237 aa)) enclose the ABC transporter domain. Position 45 to 52 (45 to 52 (GPNGAGKS)) interacts with ATP.

The protein belongs to the ABC transporter superfamily. Heme (hemin) importer (TC 3.A.1.14.5) family. As to quaternary structure, the complex is composed of two ATP-binding proteins (HmuV), two transmembrane proteins (HmuU) and a solute-binding protein (HmuT).

It localises to the cell inner membrane. In terms of biological role, part of the ABC transporter complex HmuTUV involved in hemin import. Responsible for energy coupling to the transport system. This is Hemin import ATP-binding protein HmuV from Photobacterium damselae subsp. damselae (Listonella damsela).